An 899-amino-acid polypeptide reads, in one-letter code: Nuclear factor NF-kappa-B p100 subunit (899 aa).

Serine 23 and serine 161 each carry phosphoserine. Residues 35–224 enclose the RHD domain; it reads ADGPYLVIVE…QPIHDSKSPG (190 aa). The short motif at 337–341 is the Nuclear localization signal element; the sequence is RKRRK. The GRR stretch occupies residues 346–377; that stretch reads FSQPFGGGSHMGGGSGGSAGGYGGAGGGGSLG. Residues 403–434 are disordered; that stretch reads GGAQMAGSRRDTDAGEGAEEPRTPPEAPQGEP. Over residues 410 to 425 the composition is skewed to basic and acidic residues; sequence SRRDTDAGEGAEEPRT. Phosphothreonine is present on threonine 425. ANK repeat units follow at residues 487–516, 526–555, 559–590, 599–628, 633–663, and 667–696; these read NGDT…HAQY, LHQT…DPTL, HGDS…HAVP, EGLY…EVEA, GGRT…NVNA, and AGNT…DIHA. A disordered region spans residues 698-734; it reads NEEPLCPLPSPSTSGSDSDSEGPERDTQRNFRGHTPL. Phosphoserine occurs at positions 713, 715, and 717. The ANK 7 repeat unit spans residues 729–755; that stretch reads RGHTPLDLTCSTKVKTLLLNAAQNTTE. The region spanning 764–851 is the Death domain; the sequence is AGPGLSLGDA…EGVRLLKGPE (88 aa). The residue at position 812 (serine 812) is a Phosphoserine. Basic and acidic residues predominate over residues 851 to 865; that stretch reads ETRDKLPSTEVKEDS. Positions 851–899 are disordered; the sequence is ETRDKLPSTEVKEDSAYGSQSVEQEAEKLCPPPEPPGGLCHGHPQPQVH. Lysine 855 is covalently cross-linked (Glycyl lysine isopeptide (Lys-Gly) (interchain with G-Cter in ubiquitin)). Phosphoserine; by MAP3K14 is present on residues serine 865 and serine 869. A compositionally biased stretch (low complexity) spans 887–899; it reads GGLCHGHPQPQVH.

In terms of assembly, component of the NF-kappa-B RelB-p52 complex. Homodimer; component of the NF-kappa-B p52-p52 complex. Component of the NF-kappa-B p65-p52 complex. Component of the NF-kappa-B p52-c-Rel complex. NFKB2/p52 interacts with NFKBIE. Component of a complex consisting of the NF-kappa-B p50-p50 homodimer and BCL3. Directly interacts with MEN1. Post-translationally, while translation occurs, the particular unfolded structure after the GRR repeat promotes the generation of p52 making it an acceptable substrate for the proteasome. This process is known as cotranslational processing. The processed form is active and the unprocessed form acts as an inhibitor (I kappa B-like), being able to form cytosolic complexes with NF-kappa B, trapping it in the cytoplasm. Complete folding of the region downstream of the GRR repeat precludes processing. Subsequent to MAP3K14-dependent serine phosphorylation, p100 polyubiquitination occurs then triggering its proteasome-dependent processing. In terms of processing, constitutive processing is tightly suppressed by its C-terminal processing inhibitory domain, named PID, which contains the death domain. Post-translationally, ubiquitinated by TRIM55; leading to processing by VCP and subsequent ubiquitin-dependent protein degradation by the proteasome. In terms of tissue distribution, highly expressed in lymph nodes and thymus.

The protein localises to the nucleus. Its subcellular location is the cytoplasm. Its function is as follows. NF-kappa-B is a pleiotropic transcription factor present in almost all cell types and is the endpoint of a series of signal transduction events that are initiated by a vast array of stimuli related to many biological processes such as inflammation, immunity, differentiation, cell growth, tumorigenesis and apoptosis. NF-kappa-B is a homo- or heterodimeric complex formed by the Rel-like domain-containing proteins RELA/p65, RELB, NFKB1/p105, NFKB1/p50, REL and NFKB2/p52. The dimers bind at kappa-B sites in the DNA of their target genes and the individual dimers have distinct preferences for different kappa-B sites that they can bind with distinguishable affinity and specificity. Different dimer combinations act as transcriptional activators or repressors, respectively. NF-kappa-B is controlled by various mechanisms of post-translational modification and subcellular compartmentalization as well as by interactions with other cofactors or corepressors. NF-kappa-B complexes are held in the cytoplasm in an inactive state complexed with members of the NF-kappa-B inhibitor (I-kappa-B) family. In a conventional activation pathway, I-kappa-B is phosphorylated by I-kappa-B kinases (IKKs) in response to different activators, subsequently degraded thus liberating the active NF-kappa-B complex which translocates to the nucleus. In a non-canonical activation pathway, the MAP3K14-activated CHUK/IKKA homodimer phosphorylates NFKB2/p100 associated with RelB, inducing its proteolytic processing to NFKB2/p52 and the formation of NF-kappa-B RelB-p52 complexes. The NF-kappa-B heterodimeric RelB-p52 complex is a transcriptional activator. The NF-kappa-B p52-p52 homodimer is a transcriptional repressor. NFKB2 appears to have dual functions such as cytoplasmic retention of attached NF-kappa-B proteins by p100 and generation of p52 by a cotranslational processing. The proteasome-mediated process ensures the production of both p52 and p100 and preserves their independent function. p52 binds to the kappa-B consensus sequence 5'-GGRNNYYCC-3', located in the enhancer region of genes involved in immune response and acute phase reactions. p52 and p100 are respectively the minor and major form; the processing of p100 being relatively poor. Isoform p49 is a subunit of the NF-kappa-B protein complex, which stimulates the HIV enhancer in synergy with p65. In concert with RELB, regulates the circadian clock by repressing the transcriptional activator activity of the CLOCK-BMAL1 heterodimer. The sequence is that of Nuclear factor NF-kappa-B p100 subunit (Nfkb2) from Mus musculus (Mouse).